Here is a 256-residue protein sequence, read N- to C-terminus: Trypsin, alkaline C (256 aa).

The N-terminal stretch at 1 to 17 (MRLFLALLALGFAAVAA) is a signal peptide. A propeptide spans 18 to 24 (VPANPQR) (activation peptide). The 232-residue stretch at 25–256 (IVGGSTTTIQ…RYTSWISNNS (232 aa)) folds into the Peptidase S1 domain. Cysteine 55 and cysteine 71 are joined by a disulfide. Active-site charge relay system residues include histidine 70 and aspartate 115. Cystine bridges form between cysteine 180–cysteine 197 and cysteine 209–cysteine 233. The Charge relay system role is filled by serine 213.

It belongs to the peptidase S1 family. In terms of tissue distribution, midgut.

It is found in the secreted. Its subcellular location is the extracellular space. It catalyses the reaction Preferential cleavage: Arg-|-Xaa, Lys-|-Xaa.. The polypeptide is Trypsin, alkaline C (Manduca sexta (Tobacco hawkmoth)).